A 356-amino-acid polypeptide reads, in one-letter code: Uroporphyrinogen decarboxylase (356 aa).

Substrate-binding positions include 27-31 (RQAGR), Asp-77, Tyr-154, Thr-209, and His-327.

The protein belongs to the uroporphyrinogen decarboxylase family. In terms of assembly, homodimer.

Its subcellular location is the cytoplasm. The catalysed reaction is uroporphyrinogen III + 4 H(+) = coproporphyrinogen III + 4 CO2. Its pathway is porphyrin-containing compound metabolism; protoporphyrin-IX biosynthesis; coproporphyrinogen-III from 5-aminolevulinate: step 4/4. Catalyzes the decarboxylation of four acetate groups of uroporphyrinogen-III to yield coproporphyrinogen-III. The polypeptide is Uroporphyrinogen decarboxylase (Hahella chejuensis (strain KCTC 2396)).